The following is a 358-amino-acid chain: Feruloyl esterase B (358 aa).

The signal sequence occupies residues 1 to 18 (MAIPLVLLLAWLLPTVFA). The interval 19 to 291 (ASLTQVSNFG…VSVVLDWFGI (273 aa)) is catalytic. Catalysis depends on S136, which acts as the Charge relay system. Residues N179 and N246 are each glycosylated (N-linked (GlcNAc...) asparagine). The interval 292-321 (TGGGGGNGGGSGSTTTTTSATTTSTGPTGG) is gly/Thr-rich linker. The segment at 297 to 318 (GNGGGSGSTTTTTSATTTSTGP) is disordered. Low complexity predominate over residues 304-318 (STTTTTSATTTSTGP). The 37-residue stretch at 322–358 (CTAAHWDQCGGNGYTGCTSCASPYTCQKVNDYYSQCL) folds into the CBM1 domain.

This sequence belongs to the carbohydrate esterase 1 (CE1) family. Feruloyl esterase type B subfamily.

It is found in the secreted. The enzyme catalyses feruloyl-polysaccharide + H2O = ferulate + polysaccharide.. Its function is as follows. Involved in degradation of plant cell walls. Hydrolyzes the feruloyl-arabinose ester bond in arabinoxylans as well as the feruloyl-galactose and feruloyl-arabinose ester bonds in pectin. Active against methyl esters of caffeate (MCA), but not sinapate (MSA). The chain is Feruloyl esterase B (faeB) from Talaromyces stipitatus (strain ATCC 10500 / CBS 375.48 / QM 6759 / NRRL 1006) (Penicillium stipitatum).